Reading from the N-terminus, the 340-residue chain is uncharacterized protein (340 aa).

This is an uncharacterized protein from Methanocaldococcus jannaschii (strain ATCC 43067 / DSM 2661 / JAL-1 / JCM 10045 / NBRC 100440) (Methanococcus jannaschii).